We begin with the raw amino-acid sequence, 491 residues long: UDP-N-acetylmuramate--L-alanine ligase (491 aa).

Residue glycine 126–threonine 132 participates in ATP binding.

Belongs to the MurCDEF family.

Its subcellular location is the cytoplasm. The enzyme catalyses UDP-N-acetyl-alpha-D-muramate + L-alanine + ATP = UDP-N-acetyl-alpha-D-muramoyl-L-alanine + ADP + phosphate + H(+). It functions in the pathway cell wall biogenesis; peptidoglycan biosynthesis. Its function is as follows. Cell wall formation. This is UDP-N-acetylmuramate--L-alanine ligase from Salmonella typhimurium (strain LT2 / SGSC1412 / ATCC 700720).